Consider the following 93-residue polypeptide: U12-lycotoxin-Ls1d (93 aa).

Positions Met1–Ser18 are cleaved as a signal peptide. Positions Glu19–Arg38 are excised as a propeptide.

The protein belongs to the neurotoxin 31 family. Post-translationally, contains 5 disulfide bonds. Expressed by the venom gland.

The protein localises to the secreted. The polypeptide is U12-lycotoxin-Ls1d (Lycosa singoriensis (Wolf spider)).